A 345-amino-acid chain; its full sequence is Phosphoribosylformylglycinamidine cyclo-ligase (345 aa).

The protein belongs to the AIR synthase family.

It is found in the cytoplasm. It catalyses the reaction 2-formamido-N(1)-(5-O-phospho-beta-D-ribosyl)acetamidine + ATP = 5-amino-1-(5-phospho-beta-D-ribosyl)imidazole + ADP + phosphate + H(+). The protein operates within purine metabolism; IMP biosynthesis via de novo pathway; 5-amino-1-(5-phospho-D-ribosyl)imidazole from N(2)-formyl-N(1)-(5-phospho-D-ribosyl)glycinamide: step 2/2. This Aeromonas salmonicida (strain A449) protein is Phosphoribosylformylglycinamidine cyclo-ligase.